The primary structure comprises 737 residues: Aryl hydrocarbon receptor nuclear translocator 2 (737 aa).

Residues 1-73 (MATPAAVNPS…SRYDDDQIPG (73 aa)) form a disordered region. Over residues 64-73 (SRYDDDQIPG) the composition is skewed to basic and acidic residues. One can recognise a bHLH domain in the interval 78–131 (YARENHSEIERRRRNKMTQYITELSDMVPTCSALARKPDKLTILRMAVSHMKSM). 2 consecutive PAS domains span residues 149–221 (TEQE…ENSM) and 340–406 (SMDM…QVVK). Residues 413-456 (SVMYRFRMKNREWMLIRTSSFTFQNPYSDEIEYIICTNTNVKQL) enclose the PAC domain. 2 disordered regions span residues 525–556 (MMVPSSTSGGQQLYSQGSPFQPGHSGKSFSSS) and 588–721 (QVSW…TTNY). 2 stretches are compositionally biased toward polar residues: residues 528-543 (PSSTSGGQQLYSQGSP) and 588-626 (QVSWSGNRPPFSGQQIPAQSNKAQSSPFGIGSSHSYQAD). Over residues 627–642 (PSSYSPLSSPATSSPS) the composition is skewed to low complexity. Polar residues predominate over residues 643-656 (GNAYSNLANRNTAF). Residues 659 to 688 (SGESSQSGGQFQGRPSEVWSQWQSQHHSQQ) show a composition bias toward low complexity.

As to quaternary structure, efficient DNA binding requires dimerization with another bHLH protein. Heterodimer with the aryl hydrocarbon receptor (AHR), SIM1 or HIF2A/EPAS-1. Isoform 1 and isoform 2 are most highly expressed in the brain, eye and skeletal muscle and to a lower degree in liver, heart, kidney and swim bladder. Isoform 3 is most highly expressed in the eye, forebrain, midbrain, hindbrain, skeletal muscle, gills and brain but is barely detectable in liver, heart, kidney and swim bladder. Before the pharyngula period isoform 3 is expressed throughout the entire embryo and during this period extensively in the brain and eye.

Its subcellular location is the nucleus. Functionally, transcription factor that plays a role in the development of the hypothalamo-pituitary axis. Specifically recognizes the xenobiotic response element (XRE). Isoform 1 acts as a transcriptional activator. Isoform 3 acts as a transcriptional repressor. The sequence is that of Aryl hydrocarbon receptor nuclear translocator 2 from Danio rerio (Zebrafish).